A 404-amino-acid chain; its full sequence is Alpha-galactosidase A (404 aa).

The signal sequence occupies residues 1-23 (MRKQLLLGLGLVSALLVSVQASA). Intrachain disulfides connect Cys-45-Cys-77 and Cys-124-Cys-154. Catalysis depends on Asp-152, which acts as the Nucleophile. 185–189 (EWGDN) is a binding site for substrate. Asp-207 (proton donor) is an active-site residue.

The protein belongs to the glycosyl hydrolase 27 family.

It carries out the reaction Hydrolysis of terminal, non-reducing alpha-D-galactose residues in alpha-D-galactosides, including galactose oligosaccharides, galactomannans and galactolipids.. Functionally, hydrolyzes galactomannan found in plant cell wall, by cleaving alpha-1,6-D-galactose side-chains from the mannan backbone. Appears to act in synergy with mannanase (ManA) to elicit hydrolysis of galactomannan. Has greater activity against galactomannans with decreased degree of polymerisation values. To a lesser extent, is also able to degrade other galactosides containing alpha-1,6-linked D-galactose, such as melibiose and stachyose. The polypeptide is Alpha-galactosidase A (agaA) (Cellvibrio japonicus (strain Ueda107) (Pseudomonas fluorescens subsp. cellulosa)).